Reading from the N-terminus, the 190-residue chain is Peptidyl-tRNA hydrolase (190 aa).

Position 14 (Tyr-14) interacts with tRNA. Residue His-19 is the Proton acceptor of the active site. The tRNA site is built by Tyr-64, Asn-66, and Asn-112.

It belongs to the PTH family. Monomer.

It localises to the cytoplasm. The enzyme catalyses an N-acyl-L-alpha-aminoacyl-tRNA + H2O = an N-acyl-L-amino acid + a tRNA + H(+). In terms of biological role, hydrolyzes ribosome-free peptidyl-tRNAs (with 1 or more amino acids incorporated), which drop off the ribosome during protein synthesis, or as a result of ribosome stalling. Functionally, catalyzes the release of premature peptidyl moieties from peptidyl-tRNA molecules trapped in stalled 50S ribosomal subunits, and thus maintains levels of free tRNAs and 50S ribosomes. The protein is Peptidyl-tRNA hydrolase of Chlorobium luteolum (strain DSM 273 / BCRC 81028 / 2530) (Pelodictyon luteolum).